The following is a 369-amino-acid chain: Septin-5 (369 aa).

Thr13 bears the Phosphothreonine mark. A Septin-type G domain is found at Lys41–Gln314. Residues Gly51 to Ser58 form a G1 motif region. GTP contacts are provided by residues Gly51–Ser58, Thr85, and Gly111. A G3 motif region spans residues Asp108–Gly111. Arg168 carries the post-translational modification Omega-N-methylarginine. The tract at residues Ala189 to Asp192 is G4 motif. Lys190–Glu198 is a GTP binding site. Ser225 carries the phosphoserine modification. Gly248 and Arg263 together coordinate GTP. Residue Ser327 is modified to Phosphoserine. Residue Thr336 is modified to Phosphothreonine. A coiled-coil region spans residues Asp338–Gln369.

This sequence belongs to the TRAFAC class TrmE-Era-EngA-EngB-Septin-like GTPase superfamily. Septin GTPase family. As to quaternary structure, septins polymerize into heterooligomeric protein complexes that form filaments, and can associate with cellular membranes, actin filaments and microtubules. GTPase activity is required for filament formation. Interacts with SEPTIN2 and SEPTIN5. Interaction with SEPTIN4 not detected. In platelets, associated with a complex containing STX4. Interacts with PRKN; this interaction leads to SEPTIN5 ubiquitination and degradation. Interacts with DYRK1A. Interacts with STX1A; in the cerebellar cortex. Phosphorylated by DYRK1A.

The protein resides in the cytoplasm. It localises to the cytoskeleton. Functionally, filament-forming cytoskeletal GTPase. Involved in cytokinesis (Potential). May play a role in platelet secretion. The protein is Septin-5 of Mus musculus (Mouse).